A 402-amino-acid polypeptide reads, in one-letter code: uncharacterized protein (402 aa).

A run of 12 helical transmembrane segments spans residues 23–43 (IVSV…PLAV), 52–72 (LGYG…ATLL), 90–110 (VLYG…SVAI), 121–141 (LLVG…AAIG), 158–178 (WNGI…VLLV), 180–200 (WLGL…GFAL), 228–248 (GMGL…ITLY), 255–275 (ANAV…RLLF), 282–302 (LGGF…LLLL), 309–329 (WVGL…FPAF), 351–371 (LFVD…ANLF), and 375–395 (SMFL…IALH).

It belongs to the major facilitator superfamily. YhhS family.

Its subcellular location is the cell inner membrane. This is an uncharacterized protein from Pseudomonas aeruginosa (strain UCBPP-PA14).